Here is a 226-residue protein sequence, read N- to C-terminus: GTP-binding nuclear protein Ran (226 aa).

Positions aspartate 3–aspartate 184 constitute a Small GTPase Ran-type domain. Aspartate 14 to threonine 21 contacts GTP. The switch-I stretch occupies residues lysine 33 to valine 41. GTP-binding positions include glycine 70, asparagine 135 to aspartate 138, and serine 163 to lysine 165. Residues glycine 70 to aspartate 86 form a switch-II region.

It belongs to the small GTPase superfamily. Ran family. Found in a nuclear export complex with RanGTP, exportin and pre-miRNA.

The protein localises to the nucleus. Its function is as follows. GTP-binding protein involved in nucleocytoplasmic transport. Required for the import of protein into the nucleus and also for RNA export. Involved in chromatin condensation and control of cell cycle. In Giardia intestinalis (Giardia lamblia), this protein is GTP-binding nuclear protein Ran.